A 653-amino-acid chain; its full sequence is Leishmanolysin homolog (653 aa).

An N-terminal signal peptide occupies residues 1–44 (MHAPPTATRRSGPRRTHGIMARLVRLAAGVLVVTLVIGALTALS). Positions 45-113 (ADDAKTHPHK…ALAGDSAPDV (69 aa)) are cleaved as a propeptide — activation peptide. 2 cysteine pairs are disulfide-bonded: cysteine 138-cysteine 155 and cysteine 203-cysteine 242. Position 276 (histidine 276) interacts with Zn(2+). Residue glutamate 277 is part of the active site. Zn(2+) is bound by residues histidine 280 and histidine 346. 7 disulfides stabilise this stretch: cysteine 326–cysteine 398, cysteine 405–cysteine 468, cysteine 418–cysteine 437, cysteine 427–cysteine 502, cysteine 479–cysteine 524, cysteine 529–cysteine 579, and cysteine 549–cysteine 572. 2 N-linked (GlcNAc...) asparagine glycosylation sites follow: asparagine 383 and asparagine 409. Asparagine 569 is a glycosylation site (N-linked (GlcNAc...) asparagine). Positions 590–631 (ESMTNSGSGSSRPAPVEPSGSGSGSSAATTAPSPTRDGSAAA) are disordered. Over residues 591–600 (SMTNSGSGSS) the composition is skewed to polar residues. A compositionally biased stretch (low complexity) spans 607–631 (PSGSGSGSSAATTAPSPTRDGSAAA). Serine 628 carries the GPI-anchor amidated serine lipid modification. Positions 629–653 (AAADRIAPRTAAVALLALAVAAACV) are cleaved as a propeptide — removed in mature form.

The protein belongs to the peptidase M8 family. It depends on Zn(2+) as a cofactor.

It localises to the cell membrane. It catalyses the reaction Preference for hydrophobic residues at P1 and P1' and basic residues at P2' and P3'. A model nonapeptide is cleaved at -Ala-Tyr-|-Leu-Lys-Lys-.. Plays an integral role during the infection of macrophages in the mammalian host. The sequence is that of Leishmanolysin homolog (gp63) from Crithidia fasciculata.